The primary structure comprises 930 residues: Protein translocase subunit SecA (930 aa).

ATP-binding positions include Gln83, 101–105 (GEGKT), and Asp491.

Belongs to the SecA family. As to quaternary structure, monomer and homodimer. Part of the essential Sec protein translocation apparatus which comprises SecA, SecYEG and auxiliary proteins SecDF. Other proteins may also be involved.

Its subcellular location is the cell inner membrane. The protein resides in the cellular thylakoid membrane. The protein localises to the cytoplasm. The catalysed reaction is ATP + H2O + cellular proteinSide 1 = ADP + phosphate + cellular proteinSide 2.. Part of the Sec protein translocase complex. Interacts with the SecYEG preprotein conducting channel. Has a central role in coupling the hydrolysis of ATP to the transfer of proteins into and across the cell membrane, serving as an ATP-driven molecular motor driving the stepwise translocation of polypeptide chains across the membrane. Its function is as follows. Probably participates in protein translocation into and across both the cytoplasmic and thylakoid membranes in cyanobacterial cells. This is Protein translocase subunit SecA from Nostoc sp. (strain PCC 7120 / SAG 25.82 / UTEX 2576).